The primary structure comprises 154 residues: Myoglobin (154 aa).

A Globin domain is found at 2 to 148; sequence GLSDGEWQLV…FRNDIAAKYK (147 aa). Position 4 is a phosphoserine (Ser4). His65 serves as a coordination point for nitrite. An O2-binding site is contributed by His65. At Thr68 the chain carries Phosphothreonine. His94 lines the heme b pocket.

Belongs to the globin family. Monomeric.

The protein localises to the cytoplasm. It is found in the sarcoplasm. The catalysed reaction is Fe(III)-heme b-[protein] + nitric oxide + H2O = Fe(II)-heme b-[protein] + nitrite + 2 H(+). The enzyme catalyses H2O2 + AH2 = A + 2 H2O. In terms of biological role, monomeric heme protein which primary function is to store oxygen and facilitate its diffusion within muscle tissues. Reversibly binds oxygen through a pentacoordinated heme iron and enables its timely and efficient release as needed during periods of heightened demand. Depending on the oxidative conditions of tissues and cells, and in addition to its ability to bind oxygen, it also has a nitrite reductase activity whereby it regulates the production of bioactive nitric oxide. Under stress conditions, like hypoxia and anoxia, it also protects cells against reactive oxygen species thanks to its pseudoperoxidase activity. This chain is Myoglobin (MB), found in Vulpes chama (Cape fox).